The following is a 246-amino-acid chain: Proteasome subunit alpha (246 aa).

Belongs to the peptidase T1A family. The 20S proteasome core is composed of 14 alpha and 14 beta subunits that assemble into four stacked heptameric rings, resulting in a barrel-shaped structure. The two inner rings, each composed of seven catalytic beta subunits, are sandwiched by two outer rings, each composed of seven alpha subunits. The catalytic chamber with the active sites is on the inside of the barrel. Has a gated structure, the ends of the cylinder being occluded by the N-termini of the alpha-subunits. Is capped at one or both ends by the proteasome regulatory ATPase, PAN.

It is found in the cytoplasm. The formation of the proteasomal ATPase PAN-20S proteasome complex, via the docking of the C-termini of PAN into the intersubunit pockets in the alpha-rings, triggers opening of the gate for substrate entry. Interconversion between the open-gate and close-gate conformations leads to a dynamic regulation of the 20S proteasome proteolysis activity. In terms of biological role, component of the proteasome core, a large protease complex with broad specificity involved in protein degradation. The polypeptide is Proteasome subunit alpha (Methanopyrus kandleri (strain AV19 / DSM 6324 / JCM 9639 / NBRC 100938)).